Here is a 119-residue protein sequence, read N- to C-terminus: Holo-[acyl-carrier-protein] synthase (119 aa).

Mg(2+)-binding residues include aspartate 8 and glutamate 58.

Belongs to the P-Pant transferase superfamily. AcpS family. The cofactor is Mg(2+).

The protein localises to the cytoplasm. The catalysed reaction is apo-[ACP] + CoA = holo-[ACP] + adenosine 3',5'-bisphosphate + H(+). Functionally, transfers the 4'-phosphopantetheine moiety from coenzyme A to a Ser of acyl-carrier-protein. In Streptococcus thermophilus (strain CNRZ 1066), this protein is Holo-[acyl-carrier-protein] synthase.